We begin with the raw amino-acid sequence, 406 residues long: Tyrosine--tRNA ligase (406 aa).

Residue Y35 participates in L-tyrosine binding. Positions 40 to 49 (PTADSLHVGH) match the 'HIGH' region motif. The L-tyrosine site is built by Y168 and Q172. Positions 228–232 (KMGKT) match the 'KMSKS' region motif. K231 contacts ATP. The 65-residue stretch at 340-404 (SELLDILVEA…RGKKNYNKIV (65 aa)) folds into the S4 RNA-binding domain.

Belongs to the class-I aminoacyl-tRNA synthetase family. TyrS type 1 subfamily. Homodimer.

It localises to the cytoplasm. It catalyses the reaction tRNA(Tyr) + L-tyrosine + ATP = L-tyrosyl-tRNA(Tyr) + AMP + diphosphate + H(+). Functionally, catalyzes the attachment of tyrosine to tRNA(Tyr) in a two-step reaction: tyrosine is first activated by ATP to form Tyr-AMP and then transferred to the acceptor end of tRNA(Tyr). The sequence is that of Tyrosine--tRNA ligase from Clostridium perfringens (strain SM101 / Type A).